A 976-amino-acid polypeptide reads, in one-letter code: Vacuolar membrane protease (976 aa).

Residues 1 to 15 (MKLKSVFRSVLKYRK) lie on the Cytoplasmic side of the membrane. The helical transmembrane segment at 16–36 (TNLSLLLLITYSIITLLYIFD) threads the bilayer. Topologically, residues 37 to 359 (HERYKLNLPK…KFFVISAKTL (323 aa)) are vacuolar. 2 N-linked (GlcNAc...) asparagine glycosylation sites follow: Asn-96 and Asn-121. His-156 and Asp-168 together coordinate Zn(2+). N-linked (GlcNAc...) asparagine glycosylation is present at Asn-189. Catalysis depends on Glu-200, which acts as the Proton acceptor. Glu-201 provides a ligand contact to Zn(2+). 2 N-linked (GlcNAc...) asparagine glycosylation sites follow: Asn-212 and Asn-217. Residues Glu-226 and His-300 each coordinate Zn(2+). Residues 360-380 (FYWNCIFLLVSPVVAIGLYLI) traverse the membrane as a helical segment. Residues 381 to 392 (SRDRMTWKSHSW) lie on the Cytoplasmic side of the membrane. The chain crosses the membrane as a helical span at residues 393 to 412 (LSWTRFPLSLAAGIIVQKLF). The Vacuolar portion of the chain corresponds to 413–428 (SNDIIRSNPLTFSRNY). The chain crosses the membrane as a helical span at residues 429-449 (FWPISAFFTQVIFTSYVLINC). Over 450–461 (SNFFFPCADMKS) the chain is Cytoplasmic. A helical transmembrane segment spans residues 462–482 (LSIIELFIILWTILLFTSKLL). Residues 483-496 (YSSDYRYTGLYPLS) are Vacuolar-facing. A helical transmembrane segment spans residues 497–517 (IFFLLSTIAAILRLLALALGM). Topologically, residues 518-627 (RTRKRLGREC…NSLKLEYTDY (110 aa)) are cytoplasmic. The tract at residues 528 to 610 (RDHHSNYSSH…PLLKGSNSME (83 aa)) is disordered. A compositionally biased stretch (polar residues) spans 549-558 (NLEQPQDQFT). A compositionally biased stretch (low complexity) spans 559-570 (SSQDDQASIQDD). Over residues 582-601 (NVDEDHGMDSSSQQHDERVP) the composition is skewed to basic and acidic residues. Residues 628 to 648 (AWIIQFLLIVPIPSFILFNSV) form a helical membrane-spanning segment. Topologically, residues 649–668 (DVIMDALNHTVQEGSKATFD) are vacuolar. Asn-656 is a glycosylation site (N-linked (GlcNAc...) asparagine). The helical transmembrane segment at 669–689 (VLRFGMVGSILMALPILPFFY) threads the bilayer. At 690 to 692 (KVN) the chain is on the cytoplasmic side. A helical transmembrane segment spans residues 693-713 (YITISLTALLFLISASKTLLV). Residues 714–976 (HPFTNSNPLK…LVIVKDAIIL (263 aa)) lie on the Vacuolar side of the membrane. N-linked (GlcNAc...) asparagine glycans are attached at residues Asn-768, Asn-796, Asn-811, Asn-866, and Asn-937.

This sequence belongs to the peptidase M28 family. Zn(2+) is required as a cofactor.

It localises to the vacuole membrane. Functionally, may be involved in vacuolar sorting and osmoregulation. The sequence is that of Vacuolar membrane protease from Saccharomyces cerevisiae (strain AWRI1631) (Baker's yeast).